The primary structure comprises 408 residues: Serine/threonine transporter SstT (408 aa).

Transmembrane regions (helical) follow at residues Leu11–Ala31, Phe43–Leu63, Ile82–Met102, Ala141–Leu161, Ile192–Gly212, Leu216–Val236, Ile290–Leu310, Leu316–Ala336, and Val363–Thr383.

It belongs to the dicarboxylate/amino acid:cation symporter (DAACS) (TC 2.A.23) family.

Its subcellular location is the cell inner membrane. The enzyme catalyses L-serine(in) + Na(+)(in) = L-serine(out) + Na(+)(out). The catalysed reaction is L-threonine(in) + Na(+)(in) = L-threonine(out) + Na(+)(out). In terms of biological role, involved in the import of serine and threonine into the cell, with the concomitant import of sodium (symport system). The protein is Serine/threonine transporter SstT of Shewanella sp. (strain MR-4).